A 380-amino-acid chain; its full sequence is Chaperone protein DnaJ (380 aa).

The J domain maps to 4–68; it reads DFYSVLGVSR…EKRRMYDQMG (65 aa). Residues 27–87 are compositionally biased toward basic and acidic residues; it reads KASEYHPDVS…RGATDTDRGR (61 aa). Residues 27 to 126 form a disordered region; that stretch reads KASEYHPDVS…SRSGPRQGSD (100 aa). Gly residues predominate over residues 88-100; sequence GGMGGMGGGGMGG. Residues 115-124 are compositionally biased toward low complexity; that stretch reads SQSRSGPRQG. The CR-type zinc-finger motif lies at 141 to 223; it reads GVTKQLTVTR…CRGDGQVRNE (83 aa). Residues cysteine 154, cysteine 157, cysteine 171, cysteine 174, cysteine 197, cysteine 200, cysteine 211, and cysteine 214 each contribute to the Zn(2+) site. CXXCXGXG motif repeat units lie at residues 154–161, 171–178, 197–204, and 211–218; these read CPDCDGAG, CSACDGRG, CPQCDGKG, and CSTCRGDG.

The protein belongs to the DnaJ family. Homodimer. Requires Zn(2+) as cofactor.

It localises to the cytoplasm. Functionally, participates actively in the response to hyperosmotic and heat shock by preventing the aggregation of stress-denatured proteins and by disaggregating proteins, also in an autonomous, DnaK-independent fashion. Unfolded proteins bind initially to DnaJ; upon interaction with the DnaJ-bound protein, DnaK hydrolyzes its bound ATP, resulting in the formation of a stable complex. GrpE releases ADP from DnaK; ATP binding to DnaK triggers the release of the substrate protein, thus completing the reaction cycle. Several rounds of ATP-dependent interactions between DnaJ, DnaK and GrpE are required for fully efficient folding. Also involved, together with DnaK and GrpE, in the DNA replication of plasmids through activation of initiation proteins. The chain is Chaperone protein DnaJ from Natronomonas pharaonis (strain ATCC 35678 / DSM 2160 / CIP 103997 / JCM 8858 / NBRC 14720 / NCIMB 2260 / Gabara) (Halobacterium pharaonis).